The chain runs to 51 residues: Large ribosomal subunit protein bL33 (51 aa).

Belongs to the bacterial ribosomal protein bL33 family.

The polypeptide is Large ribosomal subunit protein bL33 (Acidithiobacillus ferrooxidans (strain ATCC 53993 / BNL-5-31) (Leptospirillum ferrooxidans (ATCC 53993))).